A 298-amino-acid polypeptide reads, in one-letter code: Glycine--tRNA ligase alpha subunit (298 aa).

This sequence belongs to the class-II aminoacyl-tRNA synthetase family. As to quaternary structure, tetramer of two alpha and two beta subunits.

The protein resides in the cytoplasm. It carries out the reaction tRNA(Gly) + glycine + ATP = glycyl-tRNA(Gly) + AMP + diphosphate. This is Glycine--tRNA ligase alpha subunit from Helicobacter acinonychis (strain Sheeba).